The primary structure comprises 103 residues: Large ribosomal subunit protein bL21 (103 aa).

It belongs to the bacterial ribosomal protein bL21 family. In terms of assembly, part of the 50S ribosomal subunit. Contacts protein L20.

This protein binds to 23S rRNA in the presence of protein L20. The polypeptide is Large ribosomal subunit protein bL21 (Beijerinckia indica subsp. indica (strain ATCC 9039 / DSM 1715 / NCIMB 8712)).